We begin with the raw amino-acid sequence, 1203 residues long: DNA-directed RNA polymerase subunit beta' (1203 aa).

Residues Cys60, Cys62, Cys75, and Cys78 each contribute to the Zn(2+) site. The Mg(2+) site is built by Asp449, Asp451, and Asp453. Positions 818, 892, 899, and 902 each coordinate Zn(2+).

The protein belongs to the RNA polymerase beta' chain family. The RNAP catalytic core consists of 2 alpha, 1 beta, 1 beta' and 1 omega subunit. When a sigma factor is associated with the core the holoenzyme is formed, which can initiate transcription. Mg(2+) is required as a cofactor. Requires Zn(2+) as cofactor.

It carries out the reaction RNA(n) + a ribonucleoside 5'-triphosphate = RNA(n+1) + diphosphate. Functionally, DNA-dependent RNA polymerase catalyzes the transcription of DNA into RNA using the four ribonucleoside triphosphates as substrates. This chain is DNA-directed RNA polymerase subunit beta', found in Bacillus anthracis.